A 156-amino-acid polypeptide reads, in one-letter code: 6,7-dimethyl-8-ribityllumazine synthase (156 aa).

5-amino-6-(D-ribitylamino)uracil-binding positions include phenylalanine 23, alanine 57–glutamate 59, and alanine 81–isoleucine 83. Glycine 86–threonine 87 contributes to the (2S)-2-hydroxy-3-oxobutyl phosphate binding site. Residue histidine 89 is the Proton donor of the active site. Phenylalanine 114 contributes to the 5-amino-6-(D-ribitylamino)uracil binding site. (2S)-2-hydroxy-3-oxobutyl phosphate is bound at residue arginine 128.

The protein belongs to the DMRL synthase family.

The catalysed reaction is (2S)-2-hydroxy-3-oxobutyl phosphate + 5-amino-6-(D-ribitylamino)uracil = 6,7-dimethyl-8-(1-D-ribityl)lumazine + phosphate + 2 H2O + H(+). The protein operates within cofactor biosynthesis; riboflavin biosynthesis; riboflavin from 2-hydroxy-3-oxobutyl phosphate and 5-amino-6-(D-ribitylamino)uracil: step 1/2. Functionally, catalyzes the formation of 6,7-dimethyl-8-ribityllumazine by condensation of 5-amino-6-(D-ribitylamino)uracil with 3,4-dihydroxy-2-butanone 4-phosphate. This is the penultimate step in the biosynthesis of riboflavin. The polypeptide is 6,7-dimethyl-8-ribityllumazine synthase (Helicobacter pylori (strain P12)).